A 185-amino-acid chain; its full sequence is Elongation factor P (185 aa).

This sequence belongs to the elongation factor P family.

It is found in the cytoplasm. Its pathway is protein biosynthesis; polypeptide chain elongation. Functionally, involved in peptide bond synthesis. Stimulates efficient translation and peptide-bond synthesis on native or reconstituted 70S ribosomes in vitro. Probably functions indirectly by altering the affinity of the ribosome for aminoacyl-tRNA, thus increasing their reactivity as acceptors for peptidyl transferase. In Dictyoglomus thermophilum (strain ATCC 35947 / DSM 3960 / H-6-12), this protein is Elongation factor P.